The sequence spans 303 residues: Glycine--tRNA ligase alpha subunit (303 aa).

Belongs to the class-II aminoacyl-tRNA synthetase family. Tetramer of two alpha and two beta subunits.

It is found in the cytoplasm. It carries out the reaction tRNA(Gly) + glycine + ATP = glycyl-tRNA(Gly) + AMP + diphosphate. The chain is Glycine--tRNA ligase alpha subunit from Salmonella agona (strain SL483).